Here is a 226-residue protein sequence, read N- to C-terminus: V-type proton ATPase subunit E 1 (226 aa).

Ala2 is modified (N-acetylalanine). Tyr56 is modified (phosphotyrosine).

It belongs to the V-ATPase E subunit family. V-ATPase is a heteromultimeric enzyme made up of two complexes: the ATP-hydrolytic V1 complex and the proton translocation V0 complex. The V1 complex consists of three catalytic AB heterodimers that form a heterohexamer, three peripheral stalks each consisting of EG heterodimers, one central rotor including subunits D and F, and the regulatory subunits C and H. The proton translocation complex V0 consists of the proton transport subunit a, a ring of proteolipid subunits c9c'', rotary subunit d, subunits e and f, and the accessory subunits ATP6AP1/Ac45 and ATP6AP2/PRR. Interacts with RABL2/RABL2A; binds preferentially to GTP-bound RABL2. Interacts with ALDOC. Interacts with RAB11B. As to expression, kidney; localizes to early distal nephron, encompassing thick ascending limbs and distal convoluted tubules (at protein level). Ubiquitous. High expression in the skin.

Its subcellular location is the apical cell membrane. It is found in the cytoplasmic vesicle. It localises to the secretory vesicle. The protein localises to the synaptic vesicle membrane. The protein resides in the clathrin-coated vesicle membrane. Subunit of the V1 complex of vacuolar(H+)-ATPase (V-ATPase), a multisubunit enzyme composed of a peripheral complex (V1) that hydrolyzes ATP and a membrane integral complex (V0) that translocates protons. V-ATPase is responsible for acidifying and maintaining the pH of intracellular compartments and in some cell types, is targeted to the plasma membrane, where it is responsible for acidifying the extracellular environment. This chain is V-type proton ATPase subunit E 1 (ATP6V1E1), found in Homo sapiens (Human).